The sequence spans 317 residues: Acetyl-coenzyme A carboxylase carboxyl transferase subunit alpha (317 aa).

One can recognise a CoA carboxyltransferase C-terminal domain in the interval 38–292; it reads TLEERLARLE…DNIIKQSLVE (255 aa).

It belongs to the AccA family. In terms of assembly, acetyl-CoA carboxylase is a heterohexamer composed of biotin carboxyl carrier protein (AccB), biotin carboxylase (AccC) and two subunits each of ACCase subunit alpha (AccA) and ACCase subunit beta (AccD).

It localises to the cytoplasm. It catalyses the reaction N(6)-carboxybiotinyl-L-lysyl-[protein] + acetyl-CoA = N(6)-biotinyl-L-lysyl-[protein] + malonyl-CoA. It functions in the pathway lipid metabolism; malonyl-CoA biosynthesis; malonyl-CoA from acetyl-CoA: step 1/1. Component of the acetyl coenzyme A carboxylase (ACC) complex. First, biotin carboxylase catalyzes the carboxylation of biotin on its carrier protein (BCCP) and then the CO(2) group is transferred by the carboxyltransferase to acetyl-CoA to form malonyl-CoA. This is Acetyl-coenzyme A carboxylase carboxyl transferase subunit alpha from Oceanobacillus iheyensis (strain DSM 14371 / CIP 107618 / JCM 11309 / KCTC 3954 / HTE831).